The chain runs to 362 residues: Chorismate synthase (362 aa).

NADP(+)-binding residues include Arg48 and Arg54. Residues 131 to 133, 243 to 244, Gly287, 302 to 306, and Arg328 contribute to the FMN site; these read RSS, NA, and KPTSS.

The protein belongs to the chorismate synthase family. Homotetramer. Requires FMNH2 as cofactor.

The enzyme catalyses 5-O-(1-carboxyvinyl)-3-phosphoshikimate = chorismate + phosphate. The protein operates within metabolic intermediate biosynthesis; chorismate biosynthesis; chorismate from D-erythrose 4-phosphate and phosphoenolpyruvate: step 7/7. Its function is as follows. Catalyzes the anti-1,4-elimination of the C-3 phosphate and the C-6 proR hydrogen from 5-enolpyruvylshikimate-3-phosphate (EPSP) to yield chorismate, which is the branch point compound that serves as the starting substrate for the three terminal pathways of aromatic amino acid biosynthesis. This reaction introduces a second double bond into the aromatic ring system. In Rhodopseudomonas palustris (strain BisB18), this protein is Chorismate synthase.